We begin with the raw amino-acid sequence, 1042 residues long: Isoleucine--tRNA ligase (1042 aa).

The short motif at 48–58 (PFATGLPHFGH) is the 'HIGH' region element. The 'KMSKS' region signature appears at 594–598 (KMSKS). K597 provides a ligand contact to ATP.

This sequence belongs to the class-I aminoacyl-tRNA synthetase family. IleS type 2 subfamily. Monomer. The cofactor is Zn(2+).

Its subcellular location is the cytoplasm. It carries out the reaction tRNA(Ile) + L-isoleucine + ATP = L-isoleucyl-tRNA(Ile) + AMP + diphosphate. In terms of biological role, catalyzes the attachment of isoleucine to tRNA(Ile). As IleRS can inadvertently accommodate and process structurally similar amino acids such as valine, to avoid such errors it has two additional distinct tRNA(Ile)-dependent editing activities. One activity is designated as 'pretransfer' editing and involves the hydrolysis of activated Val-AMP. The other activity is designated 'posttransfer' editing and involves deacylation of mischarged Val-tRNA(Ile). This Borrelia garinii subsp. bavariensis (strain ATCC BAA-2496 / DSM 23469 / PBi) (Borreliella bavariensis) protein is Isoleucine--tRNA ligase.